Consider the following 141-residue polypeptide: Zinc finger protein 593 homolog (141 aa).

Positions 1–32 are disordered; that stretch reads MGRYSGHGGTHTKKKQYKRARSTKNRAKDIDQ. Over residues 10–25 the composition is skewed to basic residues; that stretch reads THTKKKQYKRARSTKN. Residues 60 to 84 form a C2H2-type zinc finger; it reads NYCIHCSKHFVTNEDLQSHIKGKPH.

The protein belongs to the ZNF593/BUD20 C2H2-type zinc-finger protein family. Associates with pre-60S ribosomal particles; released from the pre-60S particle very early in the cytoplasm.

It is found in the nucleus. The protein localises to the cytoplasm. Its function is as follows. Involved in pre-60S ribosomal particles maturation by promoting the nuclear export of the 60S ribosome. The sequence is that of Zinc finger protein 593 homolog from Dictyostelium discoideum (Social amoeba).